The primary structure comprises 452 residues: Gastrin/cholecystokinin type B receptor (452 aa).

Over M1–R55 the chain is Extracellular. N-linked (GlcNAc...) asparagine glycosylation is found at N7, N28, and N34. Residues V56–L77 form a helical membrane-spanning segment. Residues G78–T85 lie on the Cytoplasmic side of the membrane. A helical transmembrane segment spans residues V86–P107. The Extracellular portion of the chain corresponds to F108–S129. C125 and C203 form a disulfide bridge. Residues Y130–L148 form a helical membrane-spanning segment. Residues E149 to H168 lie on the Cytoplasmic side of the membrane. A helical transmembrane segment spans residues A169–Y187. At P188–S217 the chain is on the extracellular side. The chain crosses the membrane as a helical span at residues V218 to S240. Residues R241–R338 are Cytoplasmic-facing. A disordered region spans residues S255 to E285. The segment covering G263 to A272 has biased composition (gly residues). A helical membrane pass occupies residues M339 to W360. The Extracellular portion of the chain corresponds to R361 to S378. Residues F379 to H399 form a helical membrane-spanning segment. The Cytoplasmic segment spans residues R400–G452. Residue C413 is the site of S-palmitoyl cysteine attachment.

This sequence belongs to the G-protein coupled receptor 1 family.

It localises to the cell membrane. Receptor for gastrin and cholecystokinin. The CCK-B receptors occur throughout the central nervous system where they modulate anxiety, analgesia, arousal, and neuroleptic activity. This receptor mediates its action by association with G proteins that activate a phosphatidylinositol-calcium second messenger system. This Oryctolagus cuniculus (Rabbit) protein is Gastrin/cholecystokinin type B receptor (CCKBR).